The chain runs to 267 residues: PF03932 family protein CutC (267 aa).

This sequence belongs to the CutC family.

Its subcellular location is the cytoplasm. This Xylella fastidiosa (strain 9a5c) protein is PF03932 family protein CutC.